Consider the following 255-residue polypeptide: Aspartate/glutamate leucyltransferase (255 aa).

It belongs to the R-transferase family. Bpt subfamily.

The protein resides in the cytoplasm. It catalyses the reaction N-terminal L-glutamyl-[protein] + L-leucyl-tRNA(Leu) = N-terminal L-leucyl-L-glutamyl-[protein] + tRNA(Leu) + H(+). It carries out the reaction N-terminal L-aspartyl-[protein] + L-leucyl-tRNA(Leu) = N-terminal L-leucyl-L-aspartyl-[protein] + tRNA(Leu) + H(+). Functions in the N-end rule pathway of protein degradation where it conjugates Leu from its aminoacyl-tRNA to the N-termini of proteins containing an N-terminal aspartate or glutamate. This Leptospira borgpetersenii serovar Hardjo-bovis (strain JB197) protein is Aspartate/glutamate leucyltransferase.